The chain runs to 346 residues: Annexin A1 (346 aa).

Alanine 2 bears the N-acetylalanine mark. Residue serine 5 is modified to Phosphoserine; by TRPM7. Residue glutamine 19 forms an Isoglutamyl lysine isopeptide (Gln-Lys) (interchain with K-?) linkage. Tyrosine 21 carries the phosphotyrosine; by EGFR modification. Serine 27 carries the post-translational modification Phosphoserine; by PKC. Residues serine 34 and serine 37 each carry the phosphoserine modification. Threonine 41 is modified (phosphothreonine). 4 Annexin repeats span residues 42–113 (FNPS…ALLK), 114–185 (TPAQ…SLAK), 197–269 (DLAD…AIVK), and 273–344 (SKPA…ALCG). Residue lysine 58 is modified to N6-acetyllysine. Ca(2+) contacts are provided by glycine 59, valine 60, glutamate 62, lysine 97, leucine 100, glutamate 105, methionine 127, glycine 129, glycine 131, threonine 132, and glutamate 134. The residue at position 136 (threonine 136) is a Phosphothreonine. Aspartate 171, glycine 210, and arginine 213 together coordinate Ca(2+). Lysine 214 participates in a covalent cross-link: Glycyl lysine isopeptide (Lys-Gly) (interchain with G-Cter in SUMO1); alternate. Residue lysine 214 forms a Glycyl lysine isopeptide (Lys-Gly) (interchain with G-Cter in SUMO2); alternate linkage. Glycine 215 provides a ligand contact to Ca(2+). Lysine 239 carries the N6-acetyllysine modification. Residues aspartate 253, glutamate 255, and leucine 256 each contribute to the Ca(2+) site. Lysine 257 participates in a covalent cross-link: Glycyl lysine isopeptide (Lys-Gly) (interchain with G-Cter in SUMO1). Residues glutamate 261, methionine 286, glycine 288, and glycine 290 each coordinate Ca(2+). Lysine 312 is modified (N6-acetyllysine). The cysteines at positions 324 and 343 are disulfide-linked. Ca(2+) is bound by residues leucine 328, glutamate 330, and threonine 331. Residue lysine 332 forms a Glycyl lysine isopeptide (Lys-Gly) (interchain with G-Cter in SUMO1) linkage. Ca(2+) is bound at residue glutamate 336.

It belongs to the annexin family. As to quaternary structure, homodimer; non-covalently linked. Homodimer; linked by transglutamylation. Homodimers linked by transglutamylation are observed in placenta, but not in other tissues. Interacts with S100A11. Heterotetramer, formed by two molecules each of S100A11 and ANXA1. Interacts with DYSF. Interacts with EGFR. Post-translationally, phosphorylated by protein kinase C, EGFR and TRPM7. Phosphorylated in response to EGF treatment. Sumoylated. In terms of processing, proteolytically cleaved by cathepsin CTSG to release the active N-terminal peptide Ac2-26. Detected in resting neutrophils. Detected in peripheral blood T-cells. Detected in extracellular vesicles in blood serum from patients with inflammatory bowel disease, but not in serum from healthy donors. Detected in placenta (at protein level). Detected in liver.

The protein resides in the nucleus. It is found in the cytoplasm. Its subcellular location is the cell projection. The protein localises to the cilium. It localises to the cell membrane. The protein resides in the membrane. It is found in the endosome membrane. Its subcellular location is the basolateral cell membrane. The protein localises to the apical cell membrane. It localises to the lateral cell membrane. The protein resides in the secreted. It is found in the extracellular space. Its subcellular location is the extracellular exosome. The protein localises to the cytoplasmic vesicle. It localises to the secretory vesicle lumen. The protein resides in the phagocytic cup. It is found in the early endosome. Its subcellular location is the cytoplasmic vesicle membrane. Functionally, plays important roles in the innate immune response as effector of glucocorticoid-mediated responses and regulator of the inflammatory process. Has anti-inflammatory activity. Plays a role in glucocorticoid-mediated down-regulation of the early phase of the inflammatory response. Contributes to the adaptive immune response by enhancing signaling cascades that are triggered by T-cell activation, regulates differentiation and proliferation of activated T-cells. Promotes the differentiation of T-cells into Th1 cells and negatively regulates differentiation into Th2 cells. Has no effect on unstimulated T cells. Negatively regulates hormone exocytosis via activation of the formyl peptide receptors and reorganization of the actin cytoskeleton. Has high affinity for Ca(2+) and can bind up to eight Ca(2+) ions. Displays Ca(2+)-dependent binding to phospholipid membranes. Plays a role in the formation of phagocytic cups and phagosomes. Plays a role in phagocytosis by mediating the Ca(2+)-dependent interaction between phagosomes and the actin cytoskeleton. Its function is as follows. Functions at least in part by activating the formyl peptide receptors and downstream signaling cascades. Promotes chemotaxis of granulocytes and monocytes via activation of the formyl peptide receptors. Promotes rearrangement of the actin cytoskeleton, cell polarization and cell migration. Promotes resolution of inflammation and wound healing. Acts via neutrophil N-formyl peptide receptors to enhance the release of CXCL2. This chain is Annexin A1 (ANXA1), found in Homo sapiens (Human).